Consider the following 712-residue polypeptide: Ribosome-releasing factor 2, mitochondrial (712 aa).

The N-terminal 29 residues, 1–29, are a transit peptide targeting the mitochondrion; it reads MLRCAWQNGPRQSNRWLRHLSNQIWKRSY. A tr-type G domain is found at 31–310; that stretch reads SKIRNIGILA…AVNSYLPAPE (280 aa). Residues 40–47, 104–108, and 158–161 each bind GTP; these read AHIDAGKT, DTPGH, and NKMD.

This sequence belongs to the TRAFAC class translation factor GTPase superfamily. Classic translation factor GTPase family. EF-G/EF-2 subfamily.

The protein resides in the mitochondrion. In terms of biological role, mitochondrial GTPase that mediates the disassembly of ribosomes from messenger RNA at the termination of mitochondrial protein biosynthesis. Not involved in the GTP-dependent ribosomal translocation step during translation elongation. The polypeptide is Ribosome-releasing factor 2, mitochondrial (Drosophila yakuba (Fruit fly)).